Consider the following 105-residue polypeptide: Putative ferredoxin-3 (105 aa).

2 consecutive 4Fe-4S ferredoxin-type domains span residues 17 to 46 (YLTAIDAMTCIGCGRCFKVCSREVMHLHGI) and 70 to 100 (TIMVVDHAGRCIGCGACARVCPKNCQTHVAA). Cysteine 26, cysteine 29, cysteine 32, cysteine 36, cysteine 80, cysteine 83, cysteine 86, and cysteine 90 together coordinate [4Fe-4S] cluster.

[4Fe-4S] cluster is required as a cofactor.

Functionally, ferredoxins are iron-sulfur proteins that transfer electrons in a wide variety of metabolic reactions. This Sinorhizobium fredii (strain NBRC 101917 / NGR234) protein is Putative ferredoxin-3 (fdxB).